Here is a 250-residue protein sequence, read N- to C-terminus: uncharacterized protein (250 aa).

The protein to Synechocystis PCC 6803 sll0249.

This is an uncharacterized protein from Nostoc sp. (strain PCC 7120 / SAG 25.82 / UTEX 2576).